Consider the following 281-residue polypeptide: 4-diphosphocytidyl-2-C-methyl-D-erythritol kinase (281 aa).

K15 is a catalytic residue. An ATP-binding site is contributed by 98–108; that stretch reads PTGAGLGGGSS. D140 is an active-site residue.

It belongs to the GHMP kinase family. IspE subfamily.

The catalysed reaction is 4-CDP-2-C-methyl-D-erythritol + ATP = 4-CDP-2-C-methyl-D-erythritol 2-phosphate + ADP + H(+). It functions in the pathway isoprenoid biosynthesis; isopentenyl diphosphate biosynthesis via DXP pathway; isopentenyl diphosphate from 1-deoxy-D-xylulose 5-phosphate: step 3/6. Functionally, catalyzes the phosphorylation of the position 2 hydroxy group of 4-diphosphocytidyl-2C-methyl-D-erythritol. This chain is 4-diphosphocytidyl-2-C-methyl-D-erythritol kinase, found in Neisseria meningitidis serogroup C (strain 053442).